Consider the following 322-residue polypeptide: Eukaryotic translation initiation factor 3 subunit I (322 aa).

5 WD repeats span residues 4 to 43 (GHER…RLGT), 46 to 85 (GHQG…IIAS), 141 to 180 (MTES…KVVD), 184 to 223 (DHTA…CLKT), and 281 to 322 (GHFG…NIFE).

This sequence belongs to the eIF-3 subunit I family. As to quaternary structure, component of the eukaryotic translation initiation factor 3 (eIF-3) complex. The eIF-3 complex interacts with pix.

Its subcellular location is the cytoplasm. Functionally, component of the eukaryotic translation initiation factor 3 (eIF-3) complex, which is involved in protein synthesis of a specialized repertoire of mRNAs and, together with other initiation factors, stimulates binding of mRNA and methionyl-tRNAi to the 40S ribosome. The eIF-3 complex specifically targets and initiates translation of a subset of mRNAs involved in cell proliferation. This Drosophila ananassae (Fruit fly) protein is Eukaryotic translation initiation factor 3 subunit I.